Reading from the N-terminus, the 694-residue chain is uncharacterized protein (694 aa).

A Resolvase/invertase-type recombinase catalytic domain is found at 17–168 (DAFLYVRQSS…GGILNKARRG (152 aa)). Residue S25 is the O-(5'-phospho-DNA)-serine intermediate of the active site. A DNA-binding region (recombinase) is located at residues 175–316 (PIGLVYTPDA…QAALEQNATG (142 aa)). A helical membrane pass occupies residues 386–406 (AVSALLLEVMAPAAIDVALAV).

The protein resides in the membrane. This is an uncharacterized protein from Sinorhizobium fredii (strain NBRC 101917 / NGR234).